The sequence spans 291 residues: RPE-retinal G protein-coupled receptor (291 aa).

At 1–15 (MAATRALPAGLGELE) the chain is on the extracellular side. The helical transmembrane segment at 16–36 (VLAVGTVLLMEALSGISLNGL) threads the bilayer. Residues 37 to 52 (TIFSFCKTPDLRTPSN) are Cytoplasmic-facing. A helical transmembrane segment spans residues 53 to 73 (LLVLSLALADTGISLNALVAA). Over 74–91 (VSSLLRRWPHGSEGCQVH) the chain is Extracellular. A disulfide bond links cysteine 88 and cysteine 162. Residues 92-112 (GFQGFATALASICGSAAVAWG) form a helical membrane-spanning segment. Residues 113 to 130 (RYHHYCTRRQLAWDTAIP) lie on the Cytoplasmic side of the membrane. The chain crosses the membrane as a helical span at residues 131–151 (LVLFVWMSSAFWASLPLMGWG). Topologically, residues 152 to 175 (HYDYEPVGTCCTLDYSRGDRNFIS) are extracellular. Residues 176–196 (FLFTMAFFNFLVPLFITHTSY) traverse the membrane as a helical segment. The Cytoplasmic segment spans residues 197-219 (RFMEQKFSRSGHLPVNTTLPGRM). A helical transmembrane segment spans residues 220–240 (LLLGWGPYALLYLYAAIADVS). The Extracellular segment spans residues 241–247 (FISPKLQ). A helical membrane pass occupies residues 248–268 (MVPALIAKTMPTINAINYALH). Lysine 255 carries the N6-(retinylidene)lysine modification. Residues 269-291 (REMVCRGTWQCLSPQKSKKDRTQ) are Cytoplasmic-facing.

Belongs to the G-protein coupled receptor 1 family. Opsin subfamily. Covalently binds all-trans- and 11-cis-retinal.

It localises to the membrane. In terms of biological role, receptor for all-trans- and 11-cis-retinal. Binds preferentially to the former and may catalyze the isomerization of the chromophore by a retinochrome-like mechanism. The chain is RPE-retinal G protein-coupled receptor (Rgr) from Mus musculus (Mouse).